The primary structure comprises 103 residues: Large ribosomal subunit protein bL21 (103 aa).

Belongs to the bacterial ribosomal protein bL21 family. In terms of assembly, part of the 50S ribosomal subunit. Contacts protein L20.

Its function is as follows. This protein binds to 23S rRNA in the presence of protein L20. The polypeptide is Large ribosomal subunit protein bL21 (Nautilia profundicola (strain ATCC BAA-1463 / DSM 18972 / AmH)).